Here is a 510-residue protein sequence, read N- to C-terminus: Maturase K (510 aa).

The protein belongs to the intron maturase 2 family. MatK subfamily.

The protein resides in the plastid. It localises to the chloroplast. In terms of biological role, usually encoded in the trnK tRNA gene intron. Probably assists in splicing its own and other chloroplast group II introns. The sequence is that of Maturase K from Populus trichocarpa (Western balsam poplar).